Consider the following 115-residue polypeptide: NAD(P)H-quinone oxidoreductase subunit M (115 aa).

The protein belongs to the complex I NdhM subunit family. As to quaternary structure, NDH-1 can be composed of about 15 different subunits; different subcomplexes with different compositions have been identified which probably have different functions.

It localises to the cellular thylakoid membrane. The catalysed reaction is a plastoquinone + NADH + (n+1) H(+)(in) = a plastoquinol + NAD(+) + n H(+)(out). It catalyses the reaction a plastoquinone + NADPH + (n+1) H(+)(in) = a plastoquinol + NADP(+) + n H(+)(out). Functionally, NDH-1 shuttles electrons from an unknown electron donor, via FMN and iron-sulfur (Fe-S) centers, to quinones in the respiratory and/or the photosynthetic chain. The immediate electron acceptor for the enzyme in this species is believed to be plastoquinone. Couples the redox reaction to proton translocation, and thus conserves the redox energy in a proton gradient. Cyanobacterial NDH-1 also plays a role in inorganic carbon-concentration. In Prochlorococcus marinus (strain NATL2A), this protein is NAD(P)H-quinone oxidoreductase subunit M.